Reading from the N-terminus, the 212-residue chain is Peroxisomal membrane protein 4 (212 aa).

Helical transmembrane passes span 97-117 (GETHQMHSFLAAFIGGLLLFG) and 153-173 (WDPFPLHTAVIWGLVLWLFEY). An N-linked (GlcNAc...) asparagine glycan is attached at N206.

The protein belongs to the peroxisomal membrane protein PXMP2/4 family. Interacts with PEX19.

The protein localises to the peroxisome membrane. The sequence is that of Peroxisomal membrane protein 4 (Pxmp4) from Mus musculus (Mouse).